We begin with the raw amino-acid sequence, 450 residues long: Citrate/malate-proton symporter (450 aa).

The Cytoplasmic segment spans residues 1 to 32; that stretch reads MGELQTHMQLQTDTIHEGVRKENWFAKAMNIK. Residues 33-53 traverse the membrane as a helical segment; that stretch reads VGIIPLPVYALLFILITVFVM. The Extracellular portion of the chain corresponds to 54–64; that stretch reads HHDVKSDILTS. The helical transmembrane segment at 65 to 85 threads the bilayer; the sequence is IAVMAFFGFTFAQIGKSIPIV. At 86–87 the chain is on the cytoplasmic side; it reads RS. Residues 88-108 form a helical membrane-spanning segment; the sequence is IGGPAILATFIPSAVVYYHLL. Residues 109–118 are Extracellular-facing; sequence PNDIVKSTTE. A helical transmembrane segment spans residues 119–139; the sequence is FTENSNFLYLFIAGIVVGSIL. At 140–152 the chain is on the cytoplasmic side; the sequence is GMKRETLVKAFMK. A helical transmembrane segment spans residues 153 to 173; that stretch reads IFIPLIVGSVTAAIVGLAVGT. At 174-217 the chain is on the extracellular side; that stretch reads LLGLGFQHTLLYIVIPIMAGGVGEGAIPLSIGYSDIMPISQGEA. Residues 218 to 238 traverse the membrane as a helical segment; that stretch reads FALVLPSIMLGSLCAIILAGL. Over 239–273 the chain is Cytoplasmic; sequence LNRIGKKKPEWTGNGKVDRSEEESPALEESQSGQQ. The segment at 249–268 is disordered; that stretch reads WTGNGKVDRSEEESPALEES. Residues 274–294 traverse the membrane as a helical segment; the sequence is MFNLSLFASGGILAVSLYLVG. Methionine 295 is a topological domain (extracellular). Residues 296-316 traverse the membrane as a helical segment; that stretch reads LAHDFFGFPAPVAMLLLAVLI. The Cytoplasmic portion of the chain corresponds to 317–335; it reads KLFRLVPASIENGAFGVSR. A helical membrane pass occupies residues 336–356; the sequence is FFSTAVTYPLLFAIGVSMTPW. The Extracellular segment spans residues 357 to 364; it reads DKLVAAFN. A helical membrane pass occupies residues 365-385; that stretch reads LSNIITILSVVVTMMAVGFFT. At 386–428 the chain is on the cytoplasmic side; that stretch reads GKWLNMYPIETAIINACHSGQGGTGDVAILSAAERLELMPFAQ. A helical transmembrane segment spans residues 429-446; sequence VSTRIGGAITVSLTLLLL. Residues 447 to 450 lie on the Extracellular side of the membrane; sequence HQFY.

The protein belongs to the 2-hydroxycarboxylate transporter (2-HCT) (TC 2.A.24) family.

The protein resides in the cell membrane. The catalysed reaction is citrate(in) + 3 H(+)(in) = citrate(out) + 3 H(+)(out). It carries out the reaction (S)-malate(in) + 2 H(+)(in) = (S)-malate(out) + 2 H(+)(out). With respect to regulation, the uptake activity is inhibited by divalent metal ions such as Ca(2+), Mg(2+) and Ni(2+). Proton motive force-driven secondary transporter that catalyzes the uptake of both citrate and malate. Is an electroneutral proton-solute symporter: the number of protons transported is equal to the valence of the transported anions. Translocates the free citrate and malate anions. Citramalate binds to the transporter, but it is not translocated. Is strictly stereoselective, recognizing only the (S)-enantiomers of malate and citramalate. This chain is Citrate/malate-proton symporter, found in Bacillus subtilis (strain 168).